The sequence spans 91 residues: MASGQESRKELDRKAREGETVVPGGTGGKSVEAQEHLAEGRSRGGQTRREQLGQQGYSEMGKKGGLSTTDESGGERAAREGVTIDESKFTK.

Composition is skewed to basic and acidic residues over residues 1 to 19 (MASG…REGE) and 32 to 51 (EAQE…RREQ). Positions 1 to 91 (MASGQESRKE…VTIDESKFTK (91 aa)) are disordered.

Belongs to the small hydrophilic plant seed protein family.

LEA proteins are late embryonic proteins abundant in higher plant seed embryos. They may play an essential role in seed survival and in controlling water exchanges during seed desiccation and imbibition. The chain is Late embryogenesis abundant protein EMB564 from Zea mays (Maize).